Here is a 37-residue protein sequence, read N- to C-terminus: Large ribosomal subunit protein bL36B (37 aa).

The protein belongs to the bacterial ribosomal protein bL36 family.

The protein is Large ribosomal subunit protein bL36B of Aeromonas salmonicida (strain A449).